Consider the following 138-residue polypeptide: ATP synthase epsilon chain (138 aa).

It belongs to the ATPase epsilon chain family. F-type ATPases have 2 components, CF(1) - the catalytic core - and CF(0) - the membrane proton channel. CF(1) has five subunits: alpha(3), beta(3), gamma(1), delta(1), epsilon(1). CF(0) has three main subunits: a, b and c.

Its subcellular location is the cell inner membrane. Produces ATP from ADP in the presence of a proton gradient across the membrane. The sequence is that of ATP synthase epsilon chain from Trichlorobacter lovleyi (strain ATCC BAA-1151 / DSM 17278 / SZ) (Geobacter lovleyi).